Here is a 758-residue protein sequence, read N- to C-terminus: Vitamin K-dependent gamma-carboxylase (758 aa).

The interval Met-1–Gly-31 is disordered. N-acetylalanine is present on Ala-2. The Cytoplasmic portion of the chain corresponds to Ala-2–Asp-60. Residues Pro-12 to Ala-22 are compositionally biased toward basic and acidic residues. A helical transmembrane segment spans residues Pro-61–Gln-81. At Glu-82–Asp-113 the chain is on the lumenal side. A disulfide bridge links Cys-99 with Cys-450. A helical membrane pass occupies residues Trp-114 to Arg-134. Topologically, residues Tyr-135–Arg-136 are cytoplasmic. Residues Ile-137 to Trp-157 traverse the membrane as a helical segment. The Lumenal segment spans residues Asn-158–Gln-292. Residues Leu-293–Pro-313 form a helical membrane-spanning segment. Residues Glu-314 to Arg-361 lie on the Cytoplasmic side of the membrane. The helical transmembrane segment at Leu-362–Phe-382 threads the bilayer. Topologically, residues Leu-383–Phe-758 are lumenal. The tract at residues Pro-727–Phe-758 is disordered. Low complexity predominate over residues Pro-734–Asn-750.

The protein belongs to the vitamin K-dependent gamma-carboxylase family. As to quaternary structure, monomer. May interact with CALU.

The protein localises to the endoplasmic reticulum membrane. The enzyme catalyses 4-carboxy-L-glutamyl-[protein] + 2,3-epoxyphylloquinone + H2O + H(+) = phylloquinol + L-glutamyl-[protein] + CO2 + O2. Functionally, mediates the vitamin K-dependent carboxylation of glutamate residues to calcium-binding gamma-carboxyglutamate (Gla) residues with the concomitant conversion of the reduced hydroquinone form of vitamin K to vitamin K epoxide. Catalyzes gamma-carboxylation of various proteins, such as blood coagulation factors (F2, F7, F9 and F10), osteocalcin (BGLAP) or matrix Gla protein (MGP). In Delphinapterus leucas (Beluga whale), this protein is Vitamin K-dependent gamma-carboxylase (GGCX).